The primary structure comprises 324 residues: Deoxyhypusine hydroxylase (324 aa).

HEAT-like PBS-type repeat units follow at residues 60–86 (LKHE…VLED) and 94–119 (RHEA…YLHR). Fe cation is bound by residues His62, Glu63, His95, and Glu96. The span at 143–152 (EERKQEKLRQ) shows a compositional bias: basic and acidic residues. The segment at 143–171 (EERKQEKLRQSDFASVDPAPPMPEDDEKQ) is disordered. 3 HEAT-like PBS-type repeats span residues 189 to 219 (KRYR…LAKG), 227 to 253 (FRHE…ALSN), and 260 to 287 (VRHE…FLHD). The Fe cation site is built by His229, Glu230, His262, and Glu263.

This sequence belongs to the deoxyhypusine hydroxylase family. Fe(2+) is required as a cofactor.

The protein resides in the cytoplasm. It localises to the nucleus. The catalysed reaction is [eIF5A protein]-deoxyhypusine + AH2 + O2 = [eIF5A protein]-hypusine + A + H2O. Its pathway is protein modification; eIF5A hypusination. Functionally, catalyzes the hydroxylation of the N(6)-(4-aminobutyl)-L-lysine intermediate to form hypusine, an essential post-translational modification only found in mature eIF-5A factor. This chain is Deoxyhypusine hydroxylase (lia1), found in Neurospora crassa (strain ATCC 24698 / 74-OR23-1A / CBS 708.71 / DSM 1257 / FGSC 987).